The following is a 337-amino-acid chain: NADH-quinone oxidoreductase subunit H (337 aa).

9 helical membrane passes run 9-29 (GIPL…LLLV), 50-70 (PNVV…KFVF), 82-102 (GIFL…WAVI), 115-135 (VGIL…IMAG), 161-181 (IGFV…TAIV), 186-206 (TIWY…SALA), 245-265 (SILL…LPPI), 273-293 (VPGV…FAMV), and 313-333 (FLPI…GFDI).

The protein belongs to the complex I subunit 1 family. In terms of assembly, NDH-1 is composed of 14 different subunits. Subunits NuoA, H, J, K, L, M, N constitute the membrane sector of the complex.

It is found in the cell inner membrane. The enzyme catalyses a quinone + NADH + 5 H(+)(in) = a quinol + NAD(+) + 4 H(+)(out). Functionally, NDH-1 shuttles electrons from NADH, via FMN and iron-sulfur (Fe-S) centers, to quinones in the respiratory chain. The immediate electron acceptor for the enzyme in this species is believed to be ubiquinone. Couples the redox reaction to proton translocation (for every two electrons transferred, four hydrogen ions are translocated across the cytoplasmic membrane), and thus conserves the redox energy in a proton gradient. This subunit may bind ubiquinone. The protein is NADH-quinone oxidoreductase subunit H of Parvibaculum lavamentivorans (strain DS-1 / DSM 13023 / NCIMB 13966).